We begin with the raw amino-acid sequence, 202 residues long: Na(+)-translocating NADH-quinone reductase subunit E (202 aa).

The next 6 membrane-spanning stretches (helical) occupy residues 11-31, 39-59, 79-99, 114-134, 144-164, and 180-200; these read SIFI…YLAV, MGLG…NNLL, LTFV…QILE, GIFL…LFMV, VTFG…LAGI, and LGIT…FSGI.

Belongs to the NqrDE/RnfAE family. In terms of assembly, composed of six subunits; NqrA, NqrB, NqrC, NqrD, NqrE and NqrF.

The protein resides in the cell inner membrane. It carries out the reaction a ubiquinone + n Na(+)(in) + NADH + H(+) = a ubiquinol + n Na(+)(out) + NAD(+). Its function is as follows. NQR complex catalyzes the reduction of ubiquinone-1 to ubiquinol by two successive reactions, coupled with the transport of Na(+) ions from the cytoplasm to the periplasm. NqrA to NqrE are probably involved in the second step, the conversion of ubisemiquinone to ubiquinol. The chain is Na(+)-translocating NADH-quinone reductase subunit E from Maridesulfovibrio salexigens (strain ATCC 14822 / DSM 2638 / NCIMB 8403 / VKM B-1763) (Desulfovibrio salexigens).